Here is a 1336-residue protein sequence, read N- to C-terminus: Putative botulinum-like toxin Wo (1336 aa).

The segment at 1-476 is has protease activity; the sequence is MDVLEMFDVN…VAGMQRMVSL (476 aa). Residue histidine 250 participates in Zn(2+) binding. Residue glutamate 251 is part of the active site. Residues histidine 254 and glutamate 296 each coordinate Zn(2+).

It belongs to the peptidase M27 family. Requires Zn(2+) as cofactor.

It carries out the reaction Limited hydrolysis of proteins of the neuroexocytosis apparatus, synaptobrevins, SNAP25 or syntaxin. No detected action on small molecule substrates.. Inhibited by EDTA and 1,10-phenanthroline. When overexpressed the N-terminus (residues 1-476) cleaves rat synaptobrevin-2/VAMP2 between '89-Trp-|-Trp-90' in vitro. This releases the cytoplasmic domain of VAMP2 from the synaptic vesicle membrane, which would prevent the assembly of the trans-SNARE complex on the membrane and thus prevent vesicle-target membrane fusion and neurotransmitter release. This chain is Putative botulinum-like toxin Wo, found in Weissella oryzae (strain DSM 25784 / JCM 18191 / LMG 30913 / SG25).